Here is a 149-residue protein sequence, read N- to C-terminus: Large ribosomal subunit protein uL13 (149 aa).

This sequence belongs to the universal ribosomal protein uL13 family. Part of the 50S ribosomal subunit.

Its function is as follows. This protein is one of the early assembly proteins of the 50S ribosomal subunit, although it is not seen to bind rRNA by itself. It is important during the early stages of 50S assembly. In Chlorobium luteolum (strain DSM 273 / BCRC 81028 / 2530) (Pelodictyon luteolum), this protein is Large ribosomal subunit protein uL13.